We begin with the raw amino-acid sequence, 267 residues long: Neuferricin (267 aa).

The signal sequence occupies residues 1 to 17 (MLKYLVALISMVLAVWT). The 98-residue stretch at 53–150 (LLTKEQLSLY…RDYTPVGKLI (98 aa)) folds into the Cytochrome b5 heme-binding domain.

Belongs to the cytochrome b5 family. MAPR subfamily.

The protein localises to the secreted. Functionally, heme-binding protein which promotes neuronal but not astrocyte differentiation. This is Neuferricin (cyb5d2) from Danio rerio (Zebrafish).